The primary structure comprises 256 residues: Gluconate 5-dehydrogenase (256 aa).

An NADP(+)-binding site is contributed by 15–39; the sequence is LVTGASRGIGLTLAKGLARYGAEVV. Ser147 lines the substrate pocket. The active-site Proton acceptor is the Tyr160.

It belongs to the short-chain dehydrogenases/reductases (SDR) family. Homodimer.

It is found in the cytoplasm. The catalysed reaction is D-gluconate + NADP(+) = 5-dehydro-D-gluconate + NADPH + H(+). Functionally, catalyzes the reversible NADP-dependent oxidation of gluconate to 5-ketogluconate. Is involved in the non-phosphorylative, ketogenic oxidation of glucose. Is almost inactive with NAD as cosubstrate. Displays high substrate specificity since D-Glucose, D-sorbitol, and D-mannitol are not oxidized by the enzyme, and 2-ketogluconate and L-sorbose are not reduced. Can accept D-fructose as a substrate, with a rate that is only 10% of the rate of 5-ketogluconate reduction. In Gluconobacter oxydans (strain 621H) (Gluconobacter suboxydans), this protein is Gluconate 5-dehydrogenase.